The sequence spans 44 residues: Mu-conotoxin-like Cal 12.1.1e (44 aa).

4 cysteine pairs are disulfide-bonded: Cys3-Cys16, Cys11-Cys28, Cys18-Cys33, and Cys27-Cys38. Residue Trp17 is modified to 6'-bromotryptophan. 4-hydroxyproline is present on Pro23. 6'-bromotryptophan occurs at positions 36 and 37. Pro39 bears the 4-hydroxyproline mark. 6'-bromotryptophan is present on Trp43.

In terms of tissue distribution, expressed by the venom duct.

It localises to the secreted. Mu-conotoxins block voltage-gated sodium channels. This toxin reversibly blocks voltage-gated sodium channel in cephalopods, with no alteration in the voltage dependence of sodium conductance or on the kinetics of inactivation. The polypeptide is Mu-conotoxin-like Cal 12.1.1e (Californiconus californicus (California cone)).